The following is a 450-amino-acid chain: Endosomal transmembrane epsin interactor 1 (450 aa).

Positions 1–29 are cleaved as a signal peptide; it reads MILLVNLFVLLSVVCVLLNLAGFILGCQG. Residues 30–85 are Lumenal-facing; sequence AQFVSSVPRCDLVDLGEGKICFCCEEFQPAKCTDKENALKLFPVQPCSAVHLLLKK. Residues 86–106 form a helical membrane-spanning segment; sequence VLFALCALNALTTTVCLVAAA. At 107–450 the chain is on the cytoplasmic side; the sequence is LRYLQIFATR…LIGVIRETVL (344 aa). The mediates interaction with EPN1 stretch occupies residues 107–450; it reads LRYLQIFATR…LIGVIRETVL (344 aa). 2 short sequence motifs (PPxY; mediates interaction with ITCH) span residues 148–151 and 194–197; these read PPSY and PPPY. The segment at 235 to 284 is disordered; the sequence is DGDIPNIPAEENASTSTPSSTLVRPIRSRRALPPLRTRSKSDPVLHPSEE. Positions 246-256 are enriched in polar residues; that stretch reads NASTSTPSSTL. Basic and acidic residues predominate over residues 273–284; it reads SKSDPVLHPSEE. K274 is covalently cross-linked (Glycyl lysine isopeptide (Lys-Gly) (interchain with G-Cter in ubiquitin)). Phosphoserine is present on S275. Residues K329 and K365 each participate in a glycyl lysine isopeptide (Lys-Gly) (interchain with G-Cter in ubiquitin) cross-link.

The protein belongs to the ENTREP family. As to quaternary structure, interacts with ITCH; enhances the ubiquitination of CXCR4 by ITCH and the subsequent endocytosis and desensitization of the receptor. Interacts with EPN1. In terms of processing, monoubiquitinated at Lys-274, Lys-329 and Lys-365 by ITCH. In terms of tissue distribution, prominently expressed in muscle.

It localises to the early endosome membrane. The protein resides in the late endosome membrane. Its subcellular location is the recycling endosome membrane. It is found in the cell membrane. Functions as an activator of the E3 ubiquitin protein ligase ITCH in the ubiquitination of the CXCL12-activated CXCR4 receptor. Thereby, triggers CXCR4 endocytosis and desensitization, negatively regulating the CXCL12/CXCR4 signaling pathway. The sequence is that of Endosomal transmembrane epsin interactor 1 from Homo sapiens (Human).